Consider the following 643-residue polypeptide: Pescadillo homolog (643 aa).

The span at 305–323 (EKTKEKNHKSDNNPHEHTT) shows a compositional bias: basic and acidic residues. The disordered stretch occupies residues 305–329 (EKTKEKNHKSDNNPHEHTTNIDNNN). The region spanning 378–474 (KLKELFKNHI…NILPCSDYLT (97 aa)) is the BRCT domain. A coiled-coil region spans residues 531–615 (NYKEEEEEEN…IVLSKKKRKL (85 aa)).

This sequence belongs to the pescadillo family. Interacts with dual specificity protein phosphatase YVH1.

It localises to the nucleus. The protein resides in the nucleolus. It is found in the nucleoplasm. Functionally, required for maturation of ribosomal RNAs and formation of the large ribosomal subunit. The protein is Pescadillo homolog of Plasmodium falciparum (isolate 3D7).